We begin with the raw amino-acid sequence, 228 residues long: Cytidylate kinase (228 aa).

Position 11–19 (11–19 (GPASAGKST)) interacts with ATP.

Belongs to the cytidylate kinase family. Type 1 subfamily.

It localises to the cytoplasm. The enzyme catalyses CMP + ATP = CDP + ADP. It catalyses the reaction dCMP + ATP = dCDP + ADP. This is Cytidylate kinase from Limosilactobacillus reuteri (strain DSM 20016) (Lactobacillus reuteri).